Reading from the N-terminus, the 81-residue chain is Defensin-like protein 153 (81 aa).

The signal sequence occupies residues 1 to 26 (MKNVSQVSVAVLLIFSILVLGIGVQG). 4 cysteine pairs are disulfide-bonded: cysteine 30–cysteine 81, cysteine 41–cysteine 60, cysteine 46–cysteine 75, and cysteine 50–cysteine 77.

This sequence belongs to the DEFL family.

The protein localises to the secreted. The sequence is that of Defensin-like protein 153 (LCR31) from Arabidopsis thaliana (Mouse-ear cress).